The chain runs to 470 residues: Bifunctional protein ArgHA (470 aa).

The segment at 1–470 (MALWGGRFSQ…TSGISIRAAR (470 aa)) is argininosuccinate lyase.

It in the N-terminal section; belongs to the lyase 1 family. Argininosuccinate lyase subfamily. In the C-terminal section; belongs to the acetyltransferase family. ArgA subfamily.

Its subcellular location is the cytoplasm. The enzyme catalyses 2-(N(omega)-L-arginino)succinate = fumarate + L-arginine. It carries out the reaction L-glutamate + acetyl-CoA = N-acetyl-L-glutamate + CoA + H(+). It participates in amino-acid biosynthesis; L-arginine biosynthesis; N(2)-acetyl-L-ornithine from L-glutamate: step 1/4. It functions in the pathway amino-acid biosynthesis; L-arginine biosynthesis; L-arginine from L-ornithine and carbamoyl phosphate: step 3/3. This chain is Bifunctional protein ArgHA (argHA), found in Moritella profunda.